Here is a 669-residue protein sequence, read N- to C-terminus: Thrombospondin-type laminin G domain and EAR repeat-containing protein (669 aa).

Residues 1–19 (MSALLSLCFVLPLAAPGHG) form the signal peptide. The region spanning 58–277 (GLQLSVAAPR…RVTLGPQPPC (220 aa)) is the Laminin G-like domain. EAR repeat units lie at residues 313 to 358 (DYVE…KWTE), 360 to 408 (KFVS…KWSH), 412 to 460 (KFTP…KWNP), 464 to 506 (LFEA…VHSH), 514 to 570 (SFQL…ELNV), 574 to 622 (AFVK…RWQG), and 625 to 668 (GFVA…RLRT). N-linked (GlcNAc...) asparagine glycosylation occurs at N320. Residues N468, N497, N556, and N569 are each glycosylated (N-linked (GlcNAc...) asparagine).

Its subcellular location is the secreted. The protein resides in the cell surface. The protein localises to the cell projection. It localises to the stereocilium. In terms of biological role, plays a critical role in tooth and hair follicle morphogenesis through regulation of the Notch signaling pathway. May play a role in development or function of the auditory system. This is Thrombospondin-type laminin G domain and EAR repeat-containing protein (TSPEAR) from Homo sapiens (Human).